Here is a 141-residue protein sequence, read N- to C-terminus: Glutathione transferase FosA (141 aa).

Positions Ser-4–Gly-117 constitute a VOC domain. The Mn(2+) site is built by His-7, His-67, and Glu-113.

The protein belongs to the fosfomycin resistance protein family. As to quaternary structure, homodimer. It depends on Mn(2+) as a cofactor.

The protein localises to the cytoplasm. It carries out the reaction RX + glutathione = an S-substituted glutathione + a halide anion + H(+). Its activity is regulated as follows. Requires the monovalent cation K(+) for optimal activity. In terms of biological role, metalloglutathione transferase which confers resistance to fosfomycin by catalyzing the addition of glutathione to fosfomycin. This chain is Glutathione transferase FosA (fosA), found in Serratia marcescens.